A 244-amino-acid polypeptide reads, in one-letter code: Venom nerve growth factor 2 (244 aa).

A signal peptide spans 1–18 (MSMLCYTLIIAFLIGTWA). The propeptide occupies 19 to 125 (APKSEDNVPL…TLNRNIRAKR (107 aa)). Residues 47-66 (GLKTSRNTDQRHPAPKKAED) show a composition bias toward basic and acidic residues. Positions 47-67 (GLKTSRNTDQRHPAPKKAEDQ) are disordered. Cystine bridges form between C139–C205, C181–C233, and C193–C235.

Belongs to the NGF-beta family. In terms of assembly, homodimer; non-covalently linked. Expressed by the venom gland.

The protein resides in the secreted. Functionally, nerve growth factor is important for the development and maintenance of the sympathetic and sensory nervous systems. It stimulates division and differentiation of sympathetic and embryonic sensory neurons as well as basal forebrain cholinergic neurons in the brain. Its relevance in the snake venom is not clear. However, it has been shown to inhibit metalloproteinase-dependent proteolysis of platelet glycoprotein Ib alpha, suggesting a metalloproteinase inhibition to prevent metalloprotease autodigestion and/or protection against prey proteases. Binds a lipid between the two protein chains in the homodimer. The lipid-bound form promotes histamine relase from mouse mast cells, contrary to the lipid-free form. In Tropidechis carinatus (Australian rough-scaled snake), this protein is Venom nerve growth factor 2.